The sequence spans 204 residues: Cytochrome c biogenesis ATP-binding export protein CcmA (204 aa).

The 202-residue stretch at 3-204 (LSGHGLRCVR…ARELRIGGTT (202 aa)) folds into the ABC transporter domain. Residue 35-42 (GPNGAGKT) coordinates ATP.

Belongs to the ABC transporter superfamily. CcmA exporter (TC 3.A.1.107) family. The complex is composed of two ATP-binding proteins (CcmA) and two transmembrane proteins (CcmB).

Its subcellular location is the cell inner membrane. It catalyses the reaction heme b(in) + ATP + H2O = heme b(out) + ADP + phosphate + H(+). Functionally, part of the ABC transporter complex CcmAB involved in the biogenesis of c-type cytochromes; once thought to export heme, this seems not to be the case, but its exact role is uncertain. Responsible for energy coupling to the transport system. This is Cytochrome c biogenesis ATP-binding export protein CcmA from Nitrobacter hamburgensis (strain DSM 10229 / NCIMB 13809 / X14).